Consider the following 323-residue polypeptide: tRNA U34 carboxymethyltransferase (323 aa).

Carboxy-S-adenosyl-L-methionine contacts are provided by residues Lys-91, Trp-105, Lys-110, Gly-130, 152 to 154, 181 to 182, Met-196, Tyr-200, and Arg-315; these read DPT and IE.

Belongs to the class I-like SAM-binding methyltransferase superfamily. CmoB family. As to quaternary structure, homotetramer.

It catalyses the reaction carboxy-S-adenosyl-L-methionine + 5-hydroxyuridine(34) in tRNA = 5-carboxymethoxyuridine(34) in tRNA + S-adenosyl-L-homocysteine + H(+). Its function is as follows. Catalyzes carboxymethyl transfer from carboxy-S-adenosyl-L-methionine (Cx-SAM) to 5-hydroxyuridine (ho5U) to form 5-carboxymethoxyuridine (cmo5U) at position 34 in tRNAs. The polypeptide is tRNA U34 carboxymethyltransferase (Shigella flexneri).